We begin with the raw amino-acid sequence, 358 residues long: Protein-arginine kinase (358 aa).

The Phosphagen kinase C-terminal domain occupies 23–250 (VWPVTTFSLA…SKLSVAEVAA (228 aa)). ATP contacts are provided by residues 26 to 30 (VTTFS), 174 to 178 (KSQCF), and 203 to 208 (SSLLLG).

This sequence belongs to the ATP:guanido phosphotransferase family.

It carries out the reaction L-arginyl-[protein] + ATP = N(omega)-phospho-L-arginyl-[protein] + ADP + H(+). Its function is as follows. Catalyzes the specific phosphorylation of arginine residues in proteins. This is Protein-arginine kinase from Chlamydia pneumoniae (Chlamydophila pneumoniae).